The sequence spans 89 residues: Exodeoxyribonuclease 7 small subunit (89 aa).

It belongs to the XseB family. In terms of assembly, heterooligomer composed of large and small subunits.

It localises to the cytoplasm. It carries out the reaction Exonucleolytic cleavage in either 5'- to 3'- or 3'- to 5'-direction to yield nucleoside 5'-phosphates.. Functionally, bidirectionally degrades single-stranded DNA into large acid-insoluble oligonucleotides, which are then degraded further into small acid-soluble oligonucleotides. The polypeptide is Exodeoxyribonuclease 7 small subunit (Chlorobium phaeobacteroides (strain DSM 266 / SMG 266 / 2430)).